We begin with the raw amino-acid sequence, 733 residues long: Vinexin (733 aa).

Disordered stretches follow at residues 1 to 51 (MARI…SNLD), 129 to 165 (TWPG…RQDK), 224 to 285 (SARA…NQVP), and 352 to 448 (ETRL…KRKA). Residues 32–42 (DPNRVHTKEQL) show a composition bias toward basic and acidic residues. The span at 147 to 157 (QHAQNWSATWT) shows a compositional bias: polar residues. The 69-residue stretch at 164–232 (DKRWVKYEGI…VSARASSAEP (69 aa)) folds into the SoHo domain. 2 stretches are compositionally biased toward polar residues: residues 245 to 256 (PGTTETSSGRNW) and 264 to 277 (RNTF…SSSG). Phosphoserine is present on residues Ser412 and Ser459. 2 consecutive SH3 domains span residues 444–503 (KKRK…VLPA) and 518–579 (LEYG…INRE). The segment at 444–579 (KKRKAARLKF…PASYVQINRE (136 aa)) is binds to vinculin. The disordered stretch occupies residues 584-672 (LCDDGPQLPA…INLGPSSPNT (89 aa)). Phosphoserine; by MAPK1 is present on Ser594. A compositionally biased stretch (low complexity) spans 597–613 (PTTTAHLSSHSHPSSIP). Phosphoserine is present on residues Ser607, Ser610, and Ser624. The segment covering 638–651 (EPRSQTQSLNTPGP) has biased composition (polar residues). An SH3 3 domain is found at 674–733 (IHWTPYRAMYQYRPQNEDELELREGDRVDVMQQCDDGWFVGVSRRTQKFGTFPGNYVAPV). The binds to SOS stretch occupies residues 674–733 (IHWTPYRAMYQYRPQNEDELELREGDRVDVMQQCDDGWFVGVSRRTQKFGTFPGNYVAPV).

In terms of assembly, interacts with vinculin by the first two SH3 domains and the proline rich region of vinculin. Binds to SOS (guanine nucleotide exchange factor of RAS and RAC), through its third SH3 domain. The formation of this complex is down-regulated by phosphorylation of SOS. Interacts with SAFB2, INPPL1/SHIP2 and SRCIN1. Interacts with DLG5 through its third SH3 domain. Interacts with SOCS7 and MAPK1/ERK2. Interacts with FASLG. In terms of processing, phosphorylated at Ser-594 by MAPK1/ERK2 during cell spreading.

It is found in the cell junction. Its subcellular location is the focal adhesion. The protein resides in the cytoplasm. It localises to the cytoskeleton. Its function is as follows. Promotes up-regulation of actin stress fiber formation. This Mus musculus (Mouse) protein is Vinexin (Sorbs3).